Here is a 244-residue protein sequence, read N- to C-terminus: Small ribosomal subunit protein eS4 (244 aa).

Residues 43-106 (LPLLLIVRDT…NENYLVLFDE (64 aa)) enclose the S4 RNA-binding domain.

The protein belongs to the eukaryotic ribosomal protein eS4 family.

In Methanococcus vannielii, this protein is Small ribosomal subunit protein eS4 (rps4e).